The primary structure comprises 407 residues: Type II secretion system protein L (407 aa).

At 1–257 the chain is on the cytoplasmic side; the sequence is MEGSVSEFLT…WLRYWQIWRK (257 aa). The helical transmembrane segment at 258 to 275 threads the bilayer; the sequence is VAIAAGLFVAVSISYSLF. Topologically, residues 276-407 are periplasmic; it reads QAHQYEAQAD…VFGVFVVKPK (132 aa).

The protein belongs to the GSP L family. Type II secretion system is composed of four main components: the outer membrane complex, the inner membrane complex, the cytoplasmic secretion ATPase and the periplasm-spanning pseudopilus. Forms homodimers. Interacts with EpsM/GspM. Interacts with EpsE/GspE and EpsF/GspF.

It localises to the cell inner membrane. In terms of biological role, inner membrane component of the type II secretion system required for the energy-dependent secretion of extracellular factors such as proteases and toxins from the periplasm. Plays a role in the complex assembly and recruits EpsM resulting in a stable complex in the inner membrane. Provides thus a link between the energy-providing EpsE protein in the cytoplasm and the rest of the T2SS machinery. The protein is Type II secretion system protein L (epsL) of Vibrio cholerae serotype O1 (strain ATCC 39315 / El Tor Inaba N16961).